We begin with the raw amino-acid sequence, 370 residues long: 2-aminoethylphosphonate--pyruvate transaminase (370 aa).

Lys194 carries the N6-(pyridoxal phosphate)lysine modification.

Belongs to the class-V pyridoxal-phosphate-dependent aminotransferase family. PhnW subfamily. In terms of assembly, homodimer. Pyridoxal 5'-phosphate is required as a cofactor.

The enzyme catalyses (2-aminoethyl)phosphonate + pyruvate = phosphonoacetaldehyde + L-alanine. Involved in phosphonate degradation. The polypeptide is 2-aminoethylphosphonate--pyruvate transaminase (Paraburkholderia phymatum (strain DSM 17167 / CIP 108236 / LMG 21445 / STM815) (Burkholderia phymatum)).